We begin with the raw amino-acid sequence, 440 residues long: Xaa-Pro dipeptidase (440 aa).

Mn(2+) contacts are provided by Asp-244, Asp-255, His-335, Glu-380, and Glu-419.

It belongs to the peptidase M24B family. Bacterial-type prolidase subfamily. Mn(2+) is required as a cofactor.

The enzyme catalyses Xaa-L-Pro dipeptide + H2O = an L-alpha-amino acid + L-proline. Functionally, splits dipeptides with a prolyl residue in the C-terminal position. In Shewanella baltica (strain OS185), this protein is Xaa-Pro dipeptidase.